A 43-amino-acid chain; its full sequence is Protein PsbN (43 aa).

A helical transmembrane segment spans residues 5 to 27 (TLVTISISCLLVSFTGYALYTAF).

The protein belongs to the PsbN family.

Its subcellular location is the plastid. It is found in the chloroplast thylakoid membrane. Functionally, may play a role in photosystem I and II biogenesis. The sequence is that of Protein PsbN from Pinus koraiensis (Korean pine).